The primary structure comprises 88 residues: ATP synthase subunit c 1 (88 aa).

The next 2 membrane-spanning stretches (helical) occupy residues 4–24 (FTWVIITAGFGMAFGSLGTAI) and 53–73 (IGLAMVESLAIYVFVVSMIIL).

This sequence belongs to the ATPase C chain family. As to quaternary structure, F-type ATPases have 2 components, F(1) - the catalytic core - and F(0) - the membrane proton channel. F(1) has five subunits: alpha(3), beta(3), gamma(1), delta(1), epsilon(1). F(0) has three main subunits: a(1), b(2) and c(10-14). The alpha and beta chains form an alternating ring which encloses part of the gamma chain. F(1) is attached to F(0) by a central stalk formed by the gamma and epsilon chains, while a peripheral stalk is formed by the delta and b chains.

It localises to the cell inner membrane. In terms of biological role, f(1)F(0) ATP synthase produces ATP from ADP in the presence of a proton or sodium gradient. F-type ATPases consist of two structural domains, F(1) containing the extramembraneous catalytic core and F(0) containing the membrane proton channel, linked together by a central stalk and a peripheral stalk. During catalysis, ATP synthesis in the catalytic domain of F(1) is coupled via a rotary mechanism of the central stalk subunits to proton translocation. Its function is as follows. Key component of the F(0) channel; it plays a direct role in translocation across the membrane. A homomeric c-ring of between 10-14 subunits forms the central stalk rotor element with the F(1) delta and epsilon subunits. This Syntrophotalea carbinolica (strain DSM 2380 / NBRC 103641 / GraBd1) (Pelobacter carbinolicus) protein is ATP synthase subunit c 1.